Consider the following 276-residue polypeptide: Large ribosomal subunit protein uL2 (276 aa).

Positions 221 to 276 (RGSVMNPNDHPHGGGEGRAPIGRKAPVTPWGKPTLGLKTRKKKNKSDQYIIRRRKK) are disordered.

It belongs to the universal ribosomal protein uL2 family. Part of the 50S ribosomal subunit. Forms a bridge to the 30S subunit in the 70S ribosome.

One of the primary rRNA binding proteins. Required for association of the 30S and 50S subunits to form the 70S ribosome, for tRNA binding and peptide bond formation. It has been suggested to have peptidyltransferase activity; this is somewhat controversial. Makes several contacts with the 16S rRNA in the 70S ribosome. The protein is Large ribosomal subunit protein uL2 of Brevibacillus brevis (strain 47 / JCM 6285 / NBRC 100599).